We begin with the raw amino-acid sequence, 379 residues long: Queuine tRNA-ribosyltransferase (379 aa).

Asp-94 serves as the catalytic Proton acceptor. Residues 94–98, Asp-148, Gln-191, and Gly-218 contribute to the substrate site; that span reads DSGGF. The RNA binding stretch occupies residues 249 to 255; it reads GVGSPDA. Asp-268 acts as the Nucleophile in catalysis. The segment at 273-277 is RNA binding; important for wobble base 34 recognition; it reads TRIAR. Positions 306, 308, 311, and 337 each coordinate Zn(2+).

It belongs to the queuine tRNA-ribosyltransferase family. In terms of assembly, homodimer. Within each dimer, one monomer is responsible for RNA recognition and catalysis, while the other monomer binds to the replacement base PreQ1. Requires Zn(2+) as cofactor.

The catalysed reaction is 7-aminomethyl-7-carbaguanine + guanosine(34) in tRNA = 7-aminomethyl-7-carbaguanosine(34) in tRNA + guanine. The protein operates within tRNA modification; tRNA-queuosine biosynthesis. Functionally, catalyzes the base-exchange of a guanine (G) residue with the queuine precursor 7-aminomethyl-7-deazaguanine (PreQ1) at position 34 (anticodon wobble position) in tRNAs with GU(N) anticodons (tRNA-Asp, -Asn, -His and -Tyr). Catalysis occurs through a double-displacement mechanism. The nucleophile active site attacks the C1' of nucleotide 34 to detach the guanine base from the RNA, forming a covalent enzyme-RNA intermediate. The proton acceptor active site deprotonates the incoming PreQ1, allowing a nucleophilic attack on the C1' of the ribose to form the product. After dissociation, two additional enzymatic reactions on the tRNA convert PreQ1 to queuine (Q), resulting in the hypermodified nucleoside queuosine (7-(((4,5-cis-dihydroxy-2-cyclopenten-1-yl)amino)methyl)-7-deazaguanosine). This chain is Queuine tRNA-ribosyltransferase, found in Staphylococcus epidermidis (strain ATCC 35984 / DSM 28319 / BCRC 17069 / CCUG 31568 / BM 3577 / RP62A).